A 498-amino-acid chain; its full sequence is ATP synthase subunit beta, chloroplastic (498 aa).

Residue 172-179 (GGAGVGKT) coordinates ATP.

It belongs to the ATPase alpha/beta chains family. F-type ATPases have 2 components, CF(1) - the catalytic core - and CF(0) - the membrane proton channel. CF(1) has five subunits: alpha(3), beta(3), gamma(1), delta(1), epsilon(1). CF(0) has four main subunits: a(1), b(1), b'(1) and c(9-12).

It localises to the plastid. It is found in the chloroplast thylakoid membrane. The catalysed reaction is ATP + H2O + 4 H(+)(in) = ADP + phosphate + 5 H(+)(out). In terms of biological role, produces ATP from ADP in the presence of a proton gradient across the membrane. The catalytic sites are hosted primarily by the beta subunits. The polypeptide is ATP synthase subunit beta, chloroplastic (Nandina domestica (Heavenly bamboo)).